Here is a 90-residue protein sequence, read N- to C-terminus: MALDSAKKAQIVAKFARKEGDTGSPEVQIALLTARITELTEHLKIFKKDFSSRLGLLKLVGQRKRLLKYLKNKDYTTYSKLISELGLRDK.

It belongs to the universal ribosomal protein uS15 family. As to quaternary structure, part of the 30S ribosomal subunit. Forms a bridge to the 50S subunit in the 70S ribosome, contacting the 23S rRNA.

One of the primary rRNA binding proteins, it binds directly to 16S rRNA where it helps nucleate assembly of the platform of the 30S subunit by binding and bridging several RNA helices of the 16S rRNA. Functionally, forms an intersubunit bridge (bridge B4) with the 23S rRNA of the 50S subunit in the ribosome. This chain is Small ribosomal subunit protein uS15, found in Campylobacter concisus (strain 13826).